The chain runs to 428 residues: Enolase (428 aa).

Glutamine 163 lines the (2R)-2-phosphoglycerate pocket. The active-site Proton donor is the glutamate 205. Residues aspartate 242, glutamate 285, and aspartate 311 each coordinate Mg(2+). (2R)-2-phosphoglycerate contacts are provided by lysine 336, arginine 365, serine 366, and lysine 387. Catalysis depends on lysine 336, which acts as the Proton acceptor.

Belongs to the enolase family. It depends on Mg(2+) as a cofactor.

The protein resides in the cytoplasm. Its subcellular location is the secreted. The protein localises to the cell surface. The catalysed reaction is (2R)-2-phosphoglycerate = phosphoenolpyruvate + H2O. Its pathway is carbohydrate degradation; glycolysis; pyruvate from D-glyceraldehyde 3-phosphate: step 4/5. Catalyzes the reversible conversion of 2-phosphoglycerate (2-PG) into phosphoenolpyruvate (PEP). It is essential for the degradation of carbohydrates via glycolysis. This Desulfatibacillum aliphaticivorans protein is Enolase.